A 130-amino-acid chain; its full sequence is Small ribosomal subunit protein uS9 (130 aa).

A compositionally biased stretch (basic and acidic residues) spans 99 to 110 (KKAGFLTRDPRM). The segment at 99-130 (KKAGFLTRDPRMKERKKYGLKKARRAPQFSKR) is disordered. Over residues 111–130 (KERKKYGLKKARRAPQFSKR) the composition is skewed to basic residues.

It belongs to the universal ribosomal protein uS9 family.

This chain is Small ribosomal subunit protein uS9, found in Clostridium botulinum (strain Alaska E43 / Type E3).